The primary structure comprises 274 residues: Diaminopimelate epimerase (274 aa).

N11, Q44, and N64 together coordinate substrate. The Proton donor role is filled by C73. Substrate contacts are provided by residues 74 to 75 (GN), N157, N190, and 208 to 209 (ER). The active-site Proton acceptor is the C217. 218–219 (GS) is a substrate binding site.

This sequence belongs to the diaminopimelate epimerase family. In terms of assembly, homodimer.

Its subcellular location is the cytoplasm. It carries out the reaction (2S,6S)-2,6-diaminopimelate = meso-2,6-diaminopimelate. It participates in amino-acid biosynthesis; L-lysine biosynthesis via DAP pathway; DL-2,6-diaminopimelate from LL-2,6-diaminopimelate: step 1/1. Functionally, catalyzes the stereoinversion of LL-2,6-diaminopimelate (L,L-DAP) to meso-diaminopimelate (meso-DAP), a precursor of L-lysine and an essential component of the bacterial peptidoglycan. This Yersinia pseudotuberculosis serotype O:1b (strain IP 31758) protein is Diaminopimelate epimerase.